The primary structure comprises 636 residues: Nucleolin 2 (636 aa).

Disordered regions lie at residues 1–386 (MGKS…SKTL), 458–481 (ANER…SRTI), and 544–636 (SEIG…NDEE). 2 stretches are compositionally biased toward basic and acidic residues: residues 43-63 (KELI…KKVE) and 76-89 (EKTK…KDES). The segment covering 90–103 (SSEEEDDSSSDEEI) has biased composition (acidic residues). The span at 104-118 (APAKKRPEPIKKAKV) shows a compositional bias: basic and acidic residues. 3 stretches are compositionally biased toward acidic residues: residues 122 to 133 (SSDDDSTSDEET), 152 to 163 (SSDDDSSSDEET), and 182 to 193 (SSDDDSSSDEET). Residues 224–238 (TPAKKEPIVVKKDSS) show a composition bias toward basic and acidic residues. Acidic residues-rich tracts occupy residues 267 to 278 (SSEEESSSDDEP), 299 to 311 (SSEE…ESDD), and 331 to 341 (SSDESSDESDK). The span at 342–367 (EESKDEKVTPKKKDSDVEMVDAEQKS) shows a compositional bias: basic and acidic residues. The segment covering 368 to 383 (NAKQPKTPTNQTQGGS) has biased composition (polar residues). 2 RRM domains span residues 384–460 (KTLF…LANE) and 479–558 (RTIY…ESRP). The span at 464–481 (PRNSNPGRKGEGSQSRTI) shows a compositional bias: polar residues. Composition is skewed to basic and acidic residues over residues 552–566 (HVEE…EGRS) and 579–604 (RHSD…DRGA). Positions 622–636 (MESSKGTKTVFNDEE) are enriched in polar residues.

As to quaternary structure, interacts with THAL in the nucleus. As to expression, expressed at low levels in flower buds.

The protein resides in the nucleus. Its subcellular location is the nucleolus. Functionally, involved in pre-rRNA processing and ribosome assembly. This Arabidopsis thaliana (Mouse-ear cress) protein is Nucleolin 2.